The primary structure comprises 247 residues: Carboxy-S-adenosyl-L-methionine synthase (247 aa).

S-adenosyl-L-methionine contacts are provided by residues Tyr-39, 64–66, 117–118, Asn-132, and Arg-199; these read GCS and DI.

Belongs to the class I-like SAM-binding methyltransferase superfamily. Cx-SAM synthase family. As to quaternary structure, homodimer.

The enzyme catalyses prephenate + S-adenosyl-L-methionine = carboxy-S-adenosyl-L-methionine + 3-phenylpyruvate + H2O. In terms of biological role, catalyzes the conversion of S-adenosyl-L-methionine (SAM) to carboxy-S-adenosyl-L-methionine (Cx-SAM). The polypeptide is Carboxy-S-adenosyl-L-methionine synthase (Aeromonas salmonicida (strain A449)).